Reading from the N-terminus, the 533-residue chain is Bifunctional purine biosynthesis protein PurH (533 aa).

Residues 1-148 (MDTPRPIKRA…KNHKDVTIVV (148 aa)) enclose the MGS-like domain.

The protein belongs to the PurH family.

It carries out the reaction (6R)-10-formyltetrahydrofolate + 5-amino-1-(5-phospho-beta-D-ribosyl)imidazole-4-carboxamide = 5-formamido-1-(5-phospho-D-ribosyl)imidazole-4-carboxamide + (6S)-5,6,7,8-tetrahydrofolate. The catalysed reaction is IMP + H2O = 5-formamido-1-(5-phospho-D-ribosyl)imidazole-4-carboxamide. It participates in purine metabolism; IMP biosynthesis via de novo pathway; 5-formamido-1-(5-phospho-D-ribosyl)imidazole-4-carboxamide from 5-amino-1-(5-phospho-D-ribosyl)imidazole-4-carboxamide (10-formyl THF route): step 1/1. The protein operates within purine metabolism; IMP biosynthesis via de novo pathway; IMP from 5-formamido-1-(5-phospho-D-ribosyl)imidazole-4-carboxamide: step 1/1. The chain is Bifunctional purine biosynthesis protein PurH from Colwellia psychrerythraea (strain 34H / ATCC BAA-681) (Vibrio psychroerythus).